Here is a 508-residue protein sequence, read N- to C-terminus: Photosystem II CP47 reaction center protein (508 aa).

6 consecutive transmembrane segments (helical) span residues 21-36, 101-115, 140-156, 203-218, 237-252, and 457-472; these read AVHL…WAGS, IVLS…IWHW, GIHL…FGAF, IAAG…FHLS, VLSS…AFVV, and TFAL…HGAR.

Belongs to the PsbB/PsbC family. PsbB subfamily. In terms of assembly, PSII is composed of 1 copy each of membrane proteins PsbA, PsbB, PsbC, PsbD, PsbE, PsbF, PsbH, PsbI, PsbJ, PsbK, PsbL, PsbM, PsbT, PsbX, PsbY, PsbZ, Psb30/Ycf12, at least 3 peripheral proteins of the oxygen-evolving complex and a large number of cofactors. It forms dimeric complexes. It depends on Binds multiple chlorophylls. PSII binds additional chlorophylls, carotenoids and specific lipids. as a cofactor.

Its subcellular location is the plastid. The protein localises to the chloroplast thylakoid membrane. Its function is as follows. One of the components of the core complex of photosystem II (PSII). It binds chlorophyll and helps catalyze the primary light-induced photochemical processes of PSII. PSII is a light-driven water:plastoquinone oxidoreductase, using light energy to abstract electrons from H(2)O, generating O(2) and a proton gradient subsequently used for ATP formation. The chain is Photosystem II CP47 reaction center protein from Marchantia polymorpha (Common liverwort).